The chain runs to 440 residues: MVFSTKLYTTKLLKKLADLRLAIWLLASIGILIALGTFIEQDQPLAFYQENYPTTAPILGFVDWKFITSLNLNTLYSNIWFFGIVGFFASSLLACTYTTQIPALKKFRLWEFITNFKSLRKFQLKRQLPRNLASTSVYQLYGKNYHVFRQGKKNYAYSGLLGRVGPILVHFSILFVLFGSACGALGGYTVQEIVPRGEIFHLQNLVKSGNLSKIPQYLSWRVNDFWITYTEEAKVNQFYSDLSILDVKGQEVKRKIIFVNEPLVYNGVSVYQTDWDILGLKLKLNDQQTIQVPLNKISKSGRNFWLGSVFLDGNSKQKITILLNDLTGNIYVYDNAGLLVATTKLGQLVVFPEDQSLRFQEFLTTTGLQLKEDPGLRLIYLSFFLVMVSIYISFLSYSQIWGFEKTDEFILAGKSNRAVLAFQEDFKKDVKEILNTLKFN.

A run of 3 helical transmembrane segments spans residues 19 to 39 (LRLAIWLLASIGILIALGTFI), 78 to 98 (NIWFFGIVGFFASSLLACTYT), and 164 to 184 (VGPILVHFSILFVLFGSACGA).

This sequence belongs to the Ccs1/CcsB family. As to quaternary structure, may interact with CcsA.

Its subcellular location is the plastid. The protein resides in the chloroplast thylakoid membrane. Functionally, required during biogenesis of c-type cytochromes (cytochrome c6 and cytochrome f) at the step of heme attachment. The protein is Cytochrome c biogenesis protein Ccs1 of Emiliania huxleyi (Coccolithophore).